The primary structure comprises 232 residues: Sugar fermentation stimulation protein homolog (232 aa).

It belongs to the SfsA family.

The sequence is that of Sugar fermentation stimulation protein homolog from Alkaliphilus metalliredigens (strain QYMF).